The following is a 92-amino-acid chain: Small ribosomal subunit protein bS18 (92 aa).

This sequence belongs to the bacterial ribosomal protein bS18 family. Part of the 30S ribosomal subunit. Forms a tight heterodimer with protein bS6.

Functionally, binds as a heterodimer with protein bS6 to the central domain of the 16S rRNA, where it helps stabilize the platform of the 30S subunit. This chain is Small ribosomal subunit protein bS18, found in Caulobacter sp. (strain K31).